A 601-amino-acid chain; its full sequence is Elongation factor 4 (601 aa).

In terms of domain architecture, tr-type G spans 6-188 (NYIRNFSIVA…AIVRQLPPPH (183 aa)). GTP is bound by residues 18–23 (DHGKST) and 135–138 (NKVD).

This sequence belongs to the TRAFAC class translation factor GTPase superfamily. Classic translation factor GTPase family. LepA subfamily.

It localises to the cell inner membrane. It catalyses the reaction GTP + H2O = GDP + phosphate + H(+). Functionally, required for accurate and efficient protein synthesis under certain stress conditions. May act as a fidelity factor of the translation reaction, by catalyzing a one-codon backward translocation of tRNAs on improperly translocated ribosomes. Back-translocation proceeds from a post-translocation (POST) complex to a pre-translocation (PRE) complex, thus giving elongation factor G a second chance to translocate the tRNAs correctly. Binds to ribosomes in a GTP-dependent manner. In Bartonella quintana (strain Toulouse) (Rochalimaea quintana), this protein is Elongation factor 4.